The primary structure comprises 442 residues: PCI domain-containing protein C1105.07c (442 aa).

Residues 224 to 415 form the PCI domain; the sequence is VTFRYYLGRC…STLVLKKDPS (192 aa).

The protein localises to the cytoplasm. The protein resides in the nucleus envelope. The sequence is that of PCI domain-containing protein C1105.07c from Schizosaccharomyces pombe (strain 972 / ATCC 24843) (Fission yeast).